Consider the following 156-residue polypeptide: Neuroactive polyprotein R15 (156 aa).

The N-terminal stretch at 1-26 (MDSAGLHINFRLSHVLTVVTCILYIL) is a signal peptide. A propeptide spanning residues 27-48 (PPTTTAYSLPAPGKAAFQHQLS) is cleaved from the precursor. An intrachain disulfide couples Cys-74 to Cys-81. Gln-120 carries the post-translational modification Pyrrolidone carboxylic acid.

In terms of tissue distribution, expressed within the abdominal ganglion in neurons R15, RB(HE), the two L9(G) gill motoneurons, and L40 interneuron, all are parts of autonomic control circuit that contributes to implementing a central command to coordinate autonomic activity with escape locomotion.

The protein resides in the secreted. Its function is as follows. The alpha-1 peptide acts as an osmoregulatory peptide, increasing blood volume, and also modulates the activity of a set of cardiac motor neurons that control heart rate. The polypeptide is Neuroactive polyprotein R15 (Aplysia californica (California sea hare)).